A 522-amino-acid chain; its full sequence is Putative E3 ubiquitin-protein ligase RING1a (522 aa).

Positions 1-10 are enriched in polar residues; the sequence is MSVKNNSFSS. Residues 1–119 form a disordered region; it reads MSVKNNSFSS…RSPSSISGDQ (119 aa). Over residues 32 to 64 the composition is skewed to basic and acidic residues; the sequence is LQEKDETKEEKEGDEEVKHDEAEEDQEVVKPND. A compositionally biased stretch (acidic residues) spans 65–106; the sequence is AEEDDDGDDAEEDEEEEVEAEEDEEAEEEEEEEEEEEEEEED. Residues 136–176 form an RING-type zinc finger; that stretch reads CPICLGIIKKTRTVMECLHRFCRECIDKSMRLGNNECPACR. 2 disordered regions span residues 250 to 347 and 363 to 385; these read VLMR…DTKG and RGGT…KSVR. The segment covering 287–306 has biased composition (basic and acidic residues); that stretch reads NNNRGRDKDSSSDERGTEVR. Positions 316–325 are enriched in low complexity; that stretch reads SRSTQHPSSS. Polar residues-rich tracts occupy residues 326–336 and 366–384; these read GANKNNGNCAD and TRSN…SKSV.

As to quaternary structure, homodimer or heterodimer with RING1B. Interacts with CLF. Component of the PRC1-like complex, at least composed of RING1A, RING1B and LHP1.

Its subcellular location is the nucleus. It carries out the reaction S-ubiquitinyl-[E2 ubiquitin-conjugating enzyme]-L-cysteine + [acceptor protein]-L-lysine = [E2 ubiquitin-conjugating enzyme]-L-cysteine + N(6)-ubiquitinyl-[acceptor protein]-L-lysine.. The protein operates within protein modification; protein ubiquitination. In terms of biological role, putative E3 ubiquitin-protein ligase that mediates monoubiquitination of 'Lys-119' of histone H2A (H2AK119ub), thereby playing a central role in histone code and gene regulation. Functionally, as part of the PRC1-like complex, repress class I KNOX gene expression. PcG PRC1 complex maintains the transcriptionally repressive state of many genes, including Hox genes, throughout development. PcG PRC1 complex acts via chromatin remodeling and modification of histones, rendering chromatin heritably changed in its expressibility. The sequence is that of Putative E3 ubiquitin-protein ligase RING1a (RING1A) from Arabidopsis thaliana (Mouse-ear cress).